The chain runs to 225 residues: UPF0758 protein AZOSEA04420 (225 aa).

One can recognise an MPN domain in the interval V102 to L225. Positions 173, 175, and 186 each coordinate Zn(2+). A JAMM motif motif is present at residues H173 to D186.

The protein belongs to the UPF0758 family.

In Aromatoleum aromaticum (strain DSM 19018 / LMG 30748 / EbN1) (Azoarcus sp. (strain EbN1)), this protein is UPF0758 protein AZOSEA04420.